The chain runs to 750 residues: Protein O-mannosyl-transferase 2 (750 aa).

The segment at 1–23 is disordered; that stretch reads MPPATGGGLAESELRPRRGRCGP. Ser41 is subject to Phosphoserine. The chain crosses the membrane as a helical span at residues 54 to 74; it reads AVGWWALLALVTLLSFATRFH. Residue Asn98 is glycosylated (N-linked (GlcNAc...) asparagine). A run of 5 helical transmembrane segments spans residues 100-120, 146-166, 191-211, 231-251, and 283-303; these read TFFFDVHPPLGKMLIGLAGYL, GFCAFLGSWLVPFAYLTVLDL, QYILLDPILMFFIMAAMLSMV, LTGVSLAGALGVKFVGLFIIL, and VLCLIVLPLALYTATFAVHFM. N-linked (GlcNAc...) asparagine glycosylation occurs at Asn330. 3 consecutive MIR domains span residues 334–390, 403–459, and 464–521; these read PEHL…IKKH, VEFV…IEVV, and GNRI…VEDH. Asn445 carries an N-linked (GlcNAc...) asparagine glycan. N-linked (GlcNAc...) asparagine glycosylation is found at Asn528 and Asn583. The next 4 membrane-spanning stretches (helical) occupy residues 596–616, 643–663, 665–685, and 700–720; these read VVWWLNLLSIALYLLSGSIIA, VLLGWTLHYFPFFLMGRVLYF, HYFPAMLFSSMLTGILWDTLL, and GIHVAGILSLLLGTAYSFYLF.

The protein belongs to the glycosyltransferase 39 family. Interacts with POMT1. In terms of processing, N-glycosylated. As to expression, highly expressed in testis; detected at low levels in most tissues.

It is found in the endoplasmic reticulum membrane. It carries out the reaction a di-trans,poly-cis-dolichyl beta-D-mannosyl phosphate + L-seryl-[protein] = 3-O-(alpha-D-mannosyl)-L-seryl-[protein] + a di-trans,poly-cis-dolichyl phosphate + H(+). The catalysed reaction is a di-trans,poly-cis-dolichyl beta-D-mannosyl phosphate + L-threonyl-[protein] = 3-O-(alpha-D-mannosyl)-L-threonyl-[protein] + a di-trans,poly-cis-dolichyl phosphate + H(+). It functions in the pathway protein modification; protein glycosylation. Slightly activated by Mg(2+) and inhibited by both Ca(+) and Mn(2+). EDTA ha no effect on activity in vitro. In terms of biological role, transfers mannosyl residues to the hydroxyl group of serine or threonine residues. Coexpression of both POMT1 and POMT2 is necessary for enzyme activity, expression of either POMT1 or POMT2 alone is insufficient. Essentially dedicated to O-mannosylation of alpha-DAG1 and few other proteins but not of cadherins and protocaherins. The sequence is that of Protein O-mannosyl-transferase 2 (POMT2) from Homo sapiens (Human).